We begin with the raw amino-acid sequence, 236 residues long: UPF0502 protein Bxeno_B1639 (236 aa).

This sequence belongs to the UPF0502 family.

The sequence is that of UPF0502 protein Bxeno_B1639 from Paraburkholderia xenovorans (strain LB400).